Here is a 478-residue protein sequence, read N- to C-terminus: MTLSFITRWCDELPETYTALSPTPLNKARLIWHNAELANTLSIPSSLFKNGAGVWGGETLLPGMSPLAQVYSGHQFGVWAGQLGDGRGILLGEQQLADGTTMDWHLKGAGLTPYSRMGDGRAVLRSTIRESLASEAMHYLGIPTTRALSIVTSDSPVYRETVEPGAMLMRVAPSHLRFGHFEHFYYRREPEKVRQLADFAIRHYWSHLADDEDKYRLWFSDVVARTASLIAQWQTVGFAHGVMNTDNMSLLGLTLDYGPFGFLDDYEPGFICNHSDHQGRYSFDNQPAVALWNLQRLAQTLSPFVAVDALNEALDSYQQVLLTHYGQRMRQKLGFMTEQKEDNALLNELFSLMARERSDYTRTFRMLSLTEQHSAASPLRDEFIDRAAFDDWFARYRRRLQQDEVSDSERQQLMQSVNPALVLRNWLAQRAIEAAEKGDMTELHRLHEALRNPFSDRDDDYVSRPPDWGKRLEVSCSS.

Residues glycine 84, glycine 86, arginine 87, lysine 107, aspartate 119, glycine 120, arginine 170, and arginine 177 each contribute to the ATP site. The active-site Proton acceptor is the aspartate 246. 2 residues coordinate Mg(2+): asparagine 247 and aspartate 256. ATP is bound at residue aspartate 256.

The protein belongs to the SELO family. Requires Mg(2+) as cofactor. It depends on Mn(2+) as a cofactor.

It catalyses the reaction L-seryl-[protein] + ATP = 3-O-(5'-adenylyl)-L-seryl-[protein] + diphosphate. It carries out the reaction L-threonyl-[protein] + ATP = 3-O-(5'-adenylyl)-L-threonyl-[protein] + diphosphate. The enzyme catalyses L-tyrosyl-[protein] + ATP = O-(5'-adenylyl)-L-tyrosyl-[protein] + diphosphate. The catalysed reaction is L-histidyl-[protein] + UTP = N(tele)-(5'-uridylyl)-L-histidyl-[protein] + diphosphate. It catalyses the reaction L-seryl-[protein] + UTP = O-(5'-uridylyl)-L-seryl-[protein] + diphosphate. It carries out the reaction L-tyrosyl-[protein] + UTP = O-(5'-uridylyl)-L-tyrosyl-[protein] + diphosphate. Its function is as follows. Nucleotidyltransferase involved in the post-translational modification of proteins. It can catalyze the addition of adenosine monophosphate (AMP) or uridine monophosphate (UMP) to a protein, resulting in modifications known as AMPylation and UMPylation. The polypeptide is Protein nucleotidyltransferase YdiU (Escherichia coli O7:K1 (strain IAI39 / ExPEC)).